The following is a 119-amino-acid chain: Ribonuclease P protein component (119 aa).

The protein belongs to the RnpA family. Consists of a catalytic RNA component (M1 or rnpB) and a protein subunit.

It carries out the reaction Endonucleolytic cleavage of RNA, removing 5'-extranucleotides from tRNA precursor.. Its function is as follows. RNaseP catalyzes the removal of the 5'-leader sequence from pre-tRNA to produce the mature 5'-terminus. It can also cleave other RNA substrates such as 4.5S RNA. The protein component plays an auxiliary but essential role in vivo by binding to the 5'-leader sequence and broadening the substrate specificity of the ribozyme. This Bacillus pumilus (strain SAFR-032) protein is Ribonuclease P protein component.